Consider the following 62-residue polypeptide: Photosystem II reaction center protein Z (62 aa).

The next 2 helical transmembrane spans lie at 8 to 28 and 41 to 61; these read AVFALIAISFLLVIGVPVALA and FSGVSLWIGSVLFVGILNSFI.

Belongs to the PsbZ family. In terms of assembly, PSII is composed of 1 copy each of membrane proteins PsbA, PsbB, PsbC, PsbD, PsbE, PsbF, PsbH, PsbI, PsbJ, PsbK, PsbL, PsbM, PsbT, PsbY, PsbZ, Psb30/Ycf12, at least 3 peripheral proteins of the oxygen-evolving complex and a large number of cofactors. It forms dimeric complexes.

The protein localises to the plastid. It localises to the chloroplast thylakoid membrane. Its function is as follows. May control the interaction of photosystem II (PSII) cores with the light-harvesting antenna, regulates electron flow through the 2 photosystem reaction centers. PSII is a light-driven water plastoquinone oxidoreductase, using light energy to abstract electrons from H(2)O, generating a proton gradient subsequently used for ATP formation. This Pinus thunbergii (Japanese black pine) protein is Photosystem II reaction center protein Z.